Consider the following 132-residue polypeptide: Agouti-signaling protein (132 aa).

A signal peptide spans 1–22; it reads MDVTRLLLATLLVFLCFFTAYS. N-linked (GlcNAc...) asparagine glycosylation occurs at Asn39. Residues 61-87 are disordered; it reads QISRKEAEKKRSSKKEASMKKVARPRT. Positions 63–79 are enriched in basic and acidic residues; the sequence is SRKEAEKKRSSKKEASM. 5 cysteine pairs are disulfide-bonded: Cys93/Cys108, Cys100/Cys114, Cys107/Cys125, Cys111/Cys132, and Cys116/Cys123. One can recognise an Agouti domain in the interval 93-132; that stretch reads CVATRDSCKPPAPACCDPCAFCQCRFFRSACSCRVLSLNC.

Its subcellular location is the secreted. Involved in the regulation of melanogenesis. The binding of ASP to MC1R precludes alpha-MSH initiated signaling and thus blocks production of cAMP, leading to a down-regulation of eumelanogenesis (brown/black pigment) and thus increasing synthesis of pheomelanin (yellow/red pigment). In Macaca hecki (Heck's macaque), this protein is Agouti-signaling protein (ASIP).